A 351-amino-acid chain; its full sequence is Fe(3+) ions import ATP-binding protein FbpC (351 aa).

One can recognise an ABC transporter domain in the interval 7–237; sequence VELKNVTKRF…PASEFMASFM (231 aa). 39–46 serves as a coordination point for ATP; the sequence is GPSGCGKT.

This sequence belongs to the ABC transporter superfamily. Fe(3+) ion importer (TC 3.A.1.10) family. In terms of assembly, the complex is composed of two ATP-binding proteins (FbpC), two transmembrane proteins (FbpB) and a solute-binding protein (FbpA).

The protein resides in the cell inner membrane. The enzyme catalyses Fe(3+)(out) + ATP + H2O = Fe(3+)(in) + ADP + phosphate + H(+). Part of the ABC transporter complex FbpABC involved in Fe(3+) ions import. Responsible for energy coupling to the transport system. The chain is Fe(3+) ions import ATP-binding protein FbpC from Photorhabdus laumondii subsp. laumondii (strain DSM 15139 / CIP 105565 / TT01) (Photorhabdus luminescens subsp. laumondii).